Reading from the N-terminus, the 812-residue chain is Lon protease (812 aa).

The Lon N-terminal domain occupies 22-215 (YAVLPLRDIV…KALSFMEAEI (194 aa)). 367 to 374 (GPPGVGKT) lines the ATP pocket. The 182-residue stretch at 602–783 (EDQVGVVTGL…GEVLKHALVR (182 aa)) folds into the Lon proteolytic domain. Active-site residues include S689 and K732. The tract at residues 787 to 812 (PIEWTEQENPTAVPPVEDEAGASLAH) is disordered.

The protein belongs to the peptidase S16 family. As to quaternary structure, homohexamer. Organized in a ring with a central cavity.

The protein localises to the cytoplasm. The enzyme catalyses Hydrolysis of proteins in presence of ATP.. Functionally, ATP-dependent serine protease that mediates the selective degradation of mutant and abnormal proteins as well as certain short-lived regulatory proteins. Required for cellular homeostasis and for survival from DNA damage and developmental changes induced by stress. Degrades polypeptides processively to yield small peptide fragments that are 5 to 10 amino acids long. Binds to DNA in a double-stranded, site-specific manner. Required for wild-type virulence during the initial stages of infection in the mouse model, but not essential for the establishment and maintenance of chronic infection in this host. This Brucella abortus (strain 2308) protein is Lon protease.